Here is a 990-residue protein sequence, read N- to C-terminus: DNA polymerase (990 aa).

The segment at 936-976 (PSDDAARKRARAGPSALRKQKAASNDEDSSDEDDEDCSQAI) is disordered. Residues 960–972 (NDEDSSDEDDEDC) are compositionally biased toward acidic residues.

It belongs to the DNA polymerase type-B family.

The catalysed reaction is DNA(n) + a 2'-deoxyribonucleoside 5'-triphosphate = DNA(n+1) + diphosphate. Replicates the viral genome, host DNA polymerases cannot substitute for the viral enzyme in this process. This is DNA polymerase (POL) from Choristoneura fumiferana (Spruce budworm moth).